The sequence spans 252 residues: uncharacterized protein (252 aa).

6 helical membrane-spanning segments follow: residues 5 to 25 (LTSL…IVSF), 29 to 49 (LALV…GTFI), 61 to 81 (IAGI…GLYF), 141 to 161 (ILPS…PGII), 179 to 199 (WLLL…SKWW), and 217 to 237 (IGWI…LIQF).

This sequence belongs to the DedA family.

Its subcellular location is the cell membrane. This is an uncharacterized protein from Buchnera aphidicola subsp. Schizaphis graminum (strain Sg).